Here is a 580-residue protein sequence, read N- to C-terminus: E3 ubiquitin-protein ligase TRIM45 (580 aa).

The RING-type zinc finger occupies 29-98 (CPTCLRLFKV…QIGILCPVCD (70 aa)). 2 consecutive B box-type zinc fingers follow at residues 130 to 176 (GQGL…MVDL) and 186 to 227 (GKPI…YDFT). The Zn(2+) site is built by cysteine 135, cysteine 138, cysteine 158, histidine 162, cysteine 191, histidine 194, cysteine 214, and histidine 219. Positions 249–329 (VEALEDALAQ…LLADMRTGVE (81 aa)) form a coiled coil. A Filamin repeat occupies 394-497 (TQEVDPAQCV…VQGSPFNVTV (104 aa)).

It belongs to the TRIM/RBCC family.

Its subcellular location is the cytoplasm. It is found in the nucleus. The enzyme catalyses S-ubiquitinyl-[E2 ubiquitin-conjugating enzyme]-L-cysteine + [acceptor protein]-L-lysine = [E2 ubiquitin-conjugating enzyme]-L-cysteine + N(6)-ubiquitinyl-[acceptor protein]-L-lysine.. In terms of biological role, E3 ubiquitin-protein ligase that plays a role in the regulation of inflammatory response. Mechanistically, mediates the 'Lys-48'-linked polyubiquitination of TAB2, a regulatory protein of the kinase TAK1, leading to its degradation via the proteasomal pathway and inhibition of the TLR-mediated inflammatory immune response. May act as a transcriptional repressor in mitogen-activated protein kinase signaling pathway. In Mus musculus (Mouse), this protein is E3 ubiquitin-protein ligase TRIM45 (Trim45).